We begin with the raw amino-acid sequence, 527 residues long: Probable protein kinase UbiB (527 aa).

The Protein kinase domain maps to 118-501; the sequence is DFERVPVASA…QKRTNRLLQG (384 aa). ATP is bound by residues 124-132 and Lys-150; that span reads VASASIAQV. Asp-285 acts as the Proton acceptor in catalysis. The helical transmembrane segment at 502 to 522 threads the bilayer; the sequence is LLMFGVAVGVGAVLARAWLAI.

The protein belongs to the ABC1 family. UbiB subfamily.

It localises to the cell inner membrane. The protein operates within cofactor biosynthesis; ubiquinone biosynthesis [regulation]. Is probably a protein kinase regulator of UbiI activity which is involved in aerobic coenzyme Q (ubiquinone) biosynthesis. The sequence is that of Probable protein kinase UbiB from Paraburkholderia phymatum (strain DSM 17167 / CIP 108236 / LMG 21445 / STM815) (Burkholderia phymatum).